Reading from the N-terminus, the 515-residue chain is Tyrosine decarboxylase 1 (515 aa).

A run of 2 repeats spans residues 81-138 (DDIT…TELE) and 141-192 (VTDW…GKDQ). Residues 81–192 (DDITNHIVPG…KVLNKIGKDQ (112 aa)) form a 2 X approximate tandem repeats region. A105 is a substrate binding site. Residues T169 and C170 each coordinate pyridoxal 5'-phosphate. Position 205 (H205) interacts with substrate. 2 residues coordinate pyridoxal 5'-phosphate: T264 and N318. An N6-(pyridoxal phosphate)lysine modification is found at K321.

This sequence belongs to the group II decarboxylase family. Pyridoxal 5'-phosphate is required as a cofactor. As to expression, mostly expressed in bulbs, and, to a lower extent, in stems, roots, leaves and flowers.

The catalysed reaction is L-tyrosine + H(+) = tyramine + CO2. The protein operates within alkaloid biosynthesis. Catalyzes the decarboxylation of L-tyrosine to tyramine, which is converted to norbelladine, a precursor to all Amaryllidaceae alkaloids such as galanthamine, lycorine and haemanthamine, and including haemanthamine- and crinamine-type alkaloids, promising anticancer agents. This is Tyrosine decarboxylase 1 from Narcissus pseudonarcissus (Daffodil).